Here is a 152-residue protein sequence, read N- to C-terminus: Protein SprT-like (152 aa).

The region spanning 13-148 (NYVKKVSIED…FACGYCHGRL (136 aa)) is the SprT-like domain. Residue His-72 participates in Zn(2+) binding. The active site involves Glu-73. A Zn(2+)-binding site is contributed by His-76.

It belongs to the SprT family. Zn(2+) serves as cofactor.

The protein resides in the cytoplasm. The chain is Protein SprT-like from Streptococcus agalactiae serotype III (strain NEM316).